A 122-amino-acid chain; its full sequence is Large ribosomal subunit protein uL14 (122 aa).

It belongs to the universal ribosomal protein uL14 family. In terms of assembly, part of the 50S ribosomal subunit. Forms a cluster with proteins L3 and L19. In the 70S ribosome, L14 and L19 interact and together make contacts with the 16S rRNA in bridges B5 and B8.

Functionally, binds to 23S rRNA. Forms part of two intersubunit bridges in the 70S ribosome. The polypeptide is Large ribosomal subunit protein uL14 (Leptothrix cholodnii (strain ATCC 51168 / LMG 8142 / SP-6) (Leptothrix discophora (strain SP-6))).